Here is a 203-residue protein sequence, read N- to C-terminus: High frequency lysogenization protein HflD homolog (203 aa).

This sequence belongs to the HflD family.

It is found in the cytoplasm. Its subcellular location is the cell inner membrane. This chain is High frequency lysogenization protein HflD homolog, found in Dichelobacter nodosus (strain VCS1703A).